The sequence spans 350 residues: Phosphoribosylformylglycinamidine cyclo-ligase (350 aa).

This sequence belongs to the AIR synthase family.

The protein resides in the cytoplasm. The enzyme catalyses 2-formamido-N(1)-(5-O-phospho-beta-D-ribosyl)acetamidine + ATP = 5-amino-1-(5-phospho-beta-D-ribosyl)imidazole + ADP + phosphate + H(+). It participates in purine metabolism; IMP biosynthesis via de novo pathway; 5-amino-1-(5-phospho-D-ribosyl)imidazole from N(2)-formyl-N(1)-(5-phospho-D-ribosyl)glycinamide: step 2/2. The sequence is that of Phosphoribosylformylglycinamidine cyclo-ligase from Cupriavidus taiwanensis (strain DSM 17343 / BCRC 17206 / CCUG 44338 / CIP 107171 / LMG 19424 / R1) (Ralstonia taiwanensis (strain LMG 19424)).